Consider the following 228-residue polypeptide: L-ribulose-5-phosphate 4-epimerase UlaF (228 aa).

Substrate is bound by residues 26 to 27 (GN), 43 to 44 (SG), and 72 to 73 (SS). Residues Asp-74, His-93, and His-95 each contribute to the Zn(2+) site. The active-site Proton donor/acceptor is Asp-118. His-167 is a binding site for Zn(2+). Tyr-225 functions as the Proton donor/acceptor in the catalytic mechanism.

The protein belongs to the aldolase class II family. AraD/FucA subfamily. The cofactor is Zn(2+).

It catalyses the reaction L-ribulose 5-phosphate = D-xylulose 5-phosphate. It participates in cofactor degradation; L-ascorbate degradation; D-xylulose 5-phosphate from L-ascorbate: step 4/4. Catalyzes the isomerization of L-ribulose 5-phosphate to D-xylulose 5-phosphate. Is involved in the anaerobic L-ascorbate utilization. The polypeptide is L-ribulose-5-phosphate 4-epimerase UlaF (Shigella boydii serotype 18 (strain CDC 3083-94 / BS512)).